The following is a 494-amino-acid chain: NADPH:adrenodoxin oxidoreductase, mitochondrial (494 aa).

The N-terminal 34 residues, 1–34 (MAPRCWHWWRWSAWSGLRPSPSRSTPTPGFCQKF), are a transit peptide targeting the mitochondrion. Alanine 51, glutamate 72, leucine 80, and valine 116 together coordinate FAD. Residues 187–190 (QGNV), 231–232 (RR), and glutamate 243 each bind NADP(+). Phosphoserine is present on serine 313. Residues tryptophan 401 and 408–410 (GVI) each bind FAD. Glycine 408 contacts NADP(+).

Belongs to the ferredoxin--NADP reductase type 1 family. As to quaternary structure, monomer. Interacts directly with FDX1. Requires FAD as cofactor. Expressed in the adrenal, testis and ovary and to a lesser extent in the liver and kidney.

It is found in the mitochondrion inner membrane. It carries out the reaction 2 reduced [adrenodoxin] + NADP(+) + H(+) = 2 oxidized [adrenodoxin] + NADPH. The catalysed reaction is 2 reduced [2Fe-2S]-[ferredoxin] + NADP(+) + H(+) = 2 oxidized [2Fe-2S]-[ferredoxin] + NADPH. Its pathway is steroid metabolism; cholesterol metabolism. Its function is as follows. Serves as the first electron transfer protein in all the mitochondrial P450 systems including cholesterol side chain cleavage in all steroidogenic tissues, steroid 11-beta hydroxylation in the adrenal cortex, 25-OH-vitamin D3-24 hydroxylation in the kidney, and sterol C-27 hydroxylation in the liver. Also acts as a ferredoxin--NADP(+) reductase essential for coenzyme Q biosynthesis: together with FDX2, transfers the electrons required for the hydroxylation reaction performed by COQ6. The sequence is that of NADPH:adrenodoxin oxidoreductase, mitochondrial (Fdxr) from Mus musculus (Mouse).